The following is a 358-amino-acid chain: MAISRLIIENFRNLAAVDLEFDHGFNFLVGNNGSGKTSLLESIFYLGHGRSFKSSVSTRIITYDKPYFTLHGRIWEQQHEWSVGLQKQRKEGLTLVKINGEDGNKISDLAHLLPMQMITPEGLTLLNGGPSYRRAFLDWGLFHHRPNFHSAWSALNRLLKQRNAALQQTYDYTDLQVWDVELSKLAHQVSLWRTDYAEALRPEIEQTCRLFLPELDIQVSFHQGWDKNTDYGDLLRENFARDKHIGYTVSGPQKADFRFKANGFPVEDVLSRGQLKLLMCALRLAQGEHLMVQKNRSCIFLIDDFASELDETKRGLLAERLRQSHSQVFVTAITAEQLKQMQPENHRTFSVNNGMISL.

30-37 contacts ATP; sequence GNNGSGKT.

It belongs to the RecF family.

It localises to the cytoplasm. Functionally, the RecF protein is involved in DNA metabolism; it is required for DNA replication and normal SOS inducibility. RecF binds preferentially to single-stranded, linear DNA. It also seems to bind ATP. The polypeptide is DNA replication and repair protein RecF (Actinobacillus succinogenes (strain ATCC 55618 / DSM 22257 / CCUG 43843 / 130Z)).